The sequence spans 882 residues: DNA mismatch repair protein MutS (882 aa).

The interval 1-22 is disordered; sequence MTLPSDFPLEPPATNKDPHRDY. Residue 662-669 coordinates ATP; that stretch reads GPNASGKS.

Belongs to the DNA mismatch repair MutS family.

Functionally, this protein is involved in the repair of mismatches in DNA. It is possible that it carries out the mismatch recognition step. This protein has a weak ATPase activity. This Microcystis aeruginosa (strain NIES-843 / IAM M-2473) protein is DNA mismatch repair protein MutS.